A 423-amino-acid polypeptide reads, in one-letter code: Histidine--tRNA ligase (423 aa).

This sequence belongs to the class-II aminoacyl-tRNA synthetase family. As to quaternary structure, homodimer.

The protein resides in the cytoplasm. The enzyme catalyses tRNA(His) + L-histidine + ATP = L-histidyl-tRNA(His) + AMP + diphosphate + H(+). In Mycobacterium bovis (strain ATCC BAA-935 / AF2122/97), this protein is Histidine--tRNA ligase (hisS).